An 872-amino-acid chain; its full sequence is MEGIKLNLCLLCIFSCDIFALSNGNIHNVYGSAYSGASAGAYKTLPGSHPYGSKHVPVYKPMNKIPTPYISKKSYPAPYKPKGYYPTKRYQPTYGSKTNYPPIYKPIAKKLSSYKAIKTTYPAYKAKTSYPPSYKHKITYPPTYKPKITYPPTYKQKPSYPPSYKPKTTYPPTYKPKITYPPTYKRKPSYTPYKPKATYPPTYKPKITYPPTYKRKPSYTPYKPKTTYPPTYKPKISYPSIYKPKASYVSSYKSKKTYPPTYKPKISYPPTYKPKPSYPPTYKPKVTYPPTYKPKPSYPPTYKPKITYPPTYKPKPSYPTPYKQKPSYPPIYKSKSSYPTSYKSKKTYPPTYKPKITYPPTYKPKPSYPPSYKPKKTYSPTYKPKITYPPTYKPKPSYPPSYKPKTTYPPTYKPKISYPPTYKPKASYVSSYKSKKTYPPTYKPKISYPPTYKPKPSYPPTYKPKITYPPTYKPKPSYPPTYKPKITYPPTYKRKPSYPTPYKQKPSYPPIYKSKSSYPTSYKSKKTYPPTYKPKITYPPTYKPKPSYPPSYKPKTTYPPTYKPKIRYPPTYKPKASYPPTYKPKITYPPTYKPKPSYPTPYKQKPSYPPIYKSKSSYPTAYKSKKTYPPTYKPKITYPPTYKPKPSYPPSYRPKITYPPTYKPKKSYPQAYKSKGSYPPSYQPKKTYPPSYKPKKTYPPTYKPKISYPPTYKTKPSYPASYKRKTSYPPTYKPKISYPSTYKAKPSYPPTYKPKPSYASSYKPKIRYPPTYKPKPSYASSYKPKIRYPPTYKPKPSYASSYKPKIRYPPTYKPKPSYASSYKPKITYPPTYKPKISYPPTYKPKITYPPTYKPKISYPPAYKPKISYPSQY.

Residues 1 to 20 form the signal peptide; sequence MEGIKLNLCLLCIFSCDIFA. Residues 21-41 are nonrepetitive linker; the sequence is LSNGNIHNVYGSAYSGASAGA. 69 tandem repeats follow at residues 124–133, 134–143, 144–153, 154–163, 174–183, 184–192, 193–202, 203–212, 213–221, 222–231, 232–241, 242–251, 252–261, 262–271, 272–281, 282–291, 292–301, 302–311, 312–321, 322–331, 332–341, 342–351, 352–361, 362–371, 372–381, 382–391, 402–411, 412–421, 422–431, 432–441, 442–451, 452–461, 462–471, 472–481, 482–491, 502–511, 512–521, 522–531, 532–541, 542–551, 552–561, 562–571, 572–581, 582–591, 602–611, 612–621, 622–631, 632–641, 642–651, 652–661, 662–671, 672–681, 682–691, 702–711, 712–721, 722–731, 732–741, 742–751, 752–761, 762–771, 772–781, 782–791, 792–801, 812–821, 822–831, 832–841, 842–851, 852–861, and 862–871. The 69 X 10 AA tandem repeats of Y-[KRQ]-[PSTAHQR]-K-[AIPTSKGV]-[STR]-Y-[PTSVA]-[PSTQA]-[STYIPAQ] stretch occupies residues 124–871; the sequence is YKAKTSYPPS…YKPKISYPSQ (748 aa). The segment at 184 to 192 is nonapeptide 1; sequence YKRKPSYTP. A nonapeptide 2 region spans residues 213-221; the sequence is YKRKPSYTP. Pro residues-rich tracts occupy residues 273–282 and 291–302; these read KPKPSYPPTY and TYKPKPSYPPTY. A disordered region spans residues 273 to 781; sequence KPKPSYPPTY…YKPKPSYASS (509 aa). Residues 320 to 360 show a composition bias toward low complexity; that stretch reads TPYKQKPSYPPIYKSKSSYPTSYKSKKTYPPTYKPKITYPP. Pro residues predominate over residues 361 to 372; it reads TYKPKPSYPPSY. Over residues 377–390 the composition is skewed to low complexity; it reads TYSPTYKPKITYPP. Pro residues predominate over residues 391–402; that stretch reads TYKPKPSYPPSY. The span at 403 to 450 shows a compositional bias: low complexity; that stretch reads KPKTTYPPTYKPKISYPPTYKPKASYVSSYKSKKTYPPTYKPKISYPP. Pro residues-rich tracts occupy residues 451–462 and 471–482; these read TYKPKPSYPPTY. Positions 501 to 540 are enriched in low complexity; the sequence is PYKQKPSYPPIYKSKSSYPTSYKSKKTYPPTYKPKITYPP. Pro residues predominate over residues 541 to 552; that stretch reads TYKPKPSYPPSY. 2 stretches are compositionally biased toward low complexity: residues 568 to 590 and 600 to 640; these read YPPT…TYPP and TPYK…TYPP. Positions 641–652 are enriched in pro residues; the sequence is TYKPKPSYPPSY. 2 stretches are compositionally biased toward low complexity: residues 677–690 and 698–719; these read SYPP…TYPP and YPPT…PSYP. The segment covering 754–763 has biased composition (low complexity); that stretch reads PKPSYASSYK.

Post-translationally, hydroxylated on proline (mono- or dihydroxylation) and tyrosine residues (to L-DOPA = 3',4'-dihydroxyphenylalanine) of the tandem repeats. As to expression, produced by the byssal gland.

Its subcellular location is the secreted. Functionally, provides adhesiveness to the mussel's foot. Mussels produce one of the strongest water insoluble glues. The mussel's adhesive is a bundle of threads, called a byssus, formed by a fibrous collagenous core coated with adhesive proteins. In Mytilus coruscus (Sea mussel), this protein is Adhesive plaque matrix protein (FP1).